The following is a 154-amino-acid chain: Myoglobin (154 aa).

In terms of domain architecture, Globin spans 2–148 (GLSDGEWELV…FRNDIAAKYK (147 aa)). S4 carries the post-translational modification Phosphoserine. T68 is modified (phosphothreonine). H94 serves as a coordination point for heme b.

It belongs to the globin family. As to quaternary structure, monomeric.

It is found in the cytoplasm. The protein resides in the sarcoplasm. It carries out the reaction Fe(III)-heme b-[protein] + nitric oxide + H2O = Fe(II)-heme b-[protein] + nitrite + 2 H(+). It catalyses the reaction H2O2 + AH2 = A + 2 H2O. Functionally, monomeric heme protein which primary function is to store oxygen and facilitate its diffusion within muscle tissues. Reversibly binds oxygen through a pentacoordinated heme iron and enables its timely and efficient release as needed during periods of heightened demand. Depending on the oxidative conditions of tissues and cells, and in addition to its ability to bind oxygen, it also has a nitrite reductase activity whereby it regulates the production of bioactive nitric oxide. Under stress conditions, like hypoxia and anoxia, it also protects cells against reactive oxygen species thanks to its pseudoperoxidase activity. This is Myoglobin (MB) from Elephas maximus (Indian elephant).